The chain runs to 448 residues: MIDFMDYIQLTFSDATHWNRDNSYTALTDTANALLDFSIPERLRVHLSSLSTPQFATTYTLGTVGLIDGSISYLFSTLPLESTPSRSTLIPLRRLVPGYRQIHPPLAPESPNESRHAEPNERSEKALQSWRKETMLHATLHLPPPTTLNGLFLRRISPTTQLSLAVCSTQATPLSKSTPQASILTQLSHDTGKYSAEFLFSTDNALLGFKGLWNFGPDPRHAATAQRPRTASQSVSLLSAGGEMYYSPLSSVVGLSTGLRFTTLPAASESTHSSSSTHPAQSPISTFPYTLTLTLTPLTGSLSTTYSLLASPNLAFSSRFGFNVYSWESEMVAGCELWRRKKKRHASTLSDKDDLSWAKRKMGLLPPLPPSPVKGTSASAVTPAGEQKESDSVIKLRVDQSLNVRLLWEGRVKDLLVSAGVGLGPSLPSIGGTTYGWTGVGVSVLYST.

Disordered regions lie at residues 101–126 and 366–386; these read QIHP…SEKA and PPLP…PAGE. Positions 112–126 are enriched in basic and acidic residues; sequence NESRHAEPNERSEKA.

It belongs to the MDM10 family. Component of the ER-mitochondria encounter structure (ERMES) or MDM complex, composed of MMM1, MDM10, MDM12 and MDM34. Associates with the mitochondrial outer membrane sorting assembly machinery SAM(core) complex.

It is found in the mitochondrion outer membrane. In terms of biological role, component of the ERMES/MDM complex, which serves as a molecular tether to connect the endoplasmic reticulum and mitochondria. Components of this complex are involved in the control of mitochondrial shape and protein biogenesis and may function in phospholipid exchange. MDM10 is involved in the late assembly steps of the general translocase of the mitochondrial outer membrane (TOM complex). Functions in the TOM40-specific route of the assembly of outer membrane beta-barrel proteins, including the association of TOM40 with the receptor TOM22 and small TOM proteins. Can associate with the SAM(core) complex as well as the MDM12-MMM1 complex, both involved in late steps of the major beta-barrel assembly pathway, that is responsible for biogenesis of all outer membrane beta-barrel proteins. May act as a switch that shuttles between both complexes and channels precursor proteins into the TOM40-specific pathway. Plays a role in mitochondrial morphology and in the inheritance of mitochondria. In Coccidioides immitis (strain RS) (Valley fever fungus), this protein is Mitochondrial distribution and morphology protein 10.